We begin with the raw amino-acid sequence, 78 residues long: MEIKVKTLTEKQIDIEIELTDTIERIKERIEEKEGIPPVHQRIVYTGKQLADDLTAKHYNLERGSVLHLVLALRGGCC.

G76 is covalently cross-linked (Glycyl lysine isopeptide (Gly-Lys) (interchain with K-? in acceptor proteins)). The propeptide occupies 77–78 (CC).

Detected in stems and flower buds, but not in leaves, mature flowers and seedlings.

May function as a stable post-translational protein modifier. The sequence is that of NEDD8-like protein RUB3 (RUB3) from Arabidopsis thaliana (Mouse-ear cress).